Reading from the N-terminus, the 126-residue chain is Large ribosomal subunit protein eL18 (126 aa).

The protein belongs to the eukaryotic ribosomal protein eL18 family.

This chain is Large ribosomal subunit protein eL18, found in Methanosarcina mazei (strain ATCC BAA-159 / DSM 3647 / Goe1 / Go1 / JCM 11833 / OCM 88) (Methanosarcina frisia).